We begin with the raw amino-acid sequence, 198 residues long: MGVDLTGISKKSRVIRHHTYSTNPYIKLLIKLYKFLAKRTSSGFNKVVYQRLIKSRSNRAPISLSRIAVVMKRKAVFTAKSKAAPIAVVVGDVLDDVRMARIPAMRVCALRFSKSARQSIVAAGGECLTFDQLAMIAPTGKNTYLLRGRKSGRESVRHFGASGVPGSHSKPYATNRGKETKRGRRTGRSYKRKAFRHV.

Residues 157–198 (RHFGASGVPGSHSKPYATNRGKETKRGRRTGRSYKRKAFRHV) form a disordered region. A compositionally biased stretch (basic residues) spans 179–198 (ETKRGRRTGRSYKRKAFRHV).

It belongs to the eukaryotic ribosomal protein eL18 family.

The protein resides in the cytoplasm. The protein is Large ribosomal subunit protein eL18 (RPL18-A) of Leishmania major.